Here is a 200-residue protein sequence, read N- to C-terminus: Recombination protein RecR (200 aa).

A C4-type zinc finger spans residues 59 to 74 (CEICGNIDTRSPCTVC). The 96-residue stretch at 82 to 177 (SIIVVVADVA…KVTRLAHGVP (96 aa)) folds into the Toprim domain.

Belongs to the RecR family.

In terms of biological role, may play a role in DNA repair. It seems to be involved in an RecBC-independent recombinational process of DNA repair. It may act with RecF and RecO. The polypeptide is Recombination protein RecR (Nitrobacter hamburgensis (strain DSM 10229 / NCIMB 13809 / X14)).